The primary structure comprises 512 residues: ATP synthase subunit alpha (512 aa).

169–176 (GDRQTGKT) provides a ligand contact to ATP.

The protein belongs to the ATPase alpha/beta chains family. F-type ATPases have 2 components, CF(1) - the catalytic core - and CF(0) - the membrane proton channel. CF(1) has five subunits: alpha(3), beta(3), gamma(1), delta(1), epsilon(1). CF(0) has three main subunits: a(1), b(2) and c(9-12). The alpha and beta chains form an alternating ring which encloses part of the gamma chain. CF(1) is attached to CF(0) by a central stalk formed by the gamma and epsilon chains, while a peripheral stalk is formed by the delta and b chains.

It is found in the cell inner membrane. It catalyses the reaction ATP + H2O + 4 H(+)(in) = ADP + phosphate + 5 H(+)(out). Produces ATP from ADP in the presence of a proton gradient across the membrane. The alpha chain is a regulatory subunit. In Orientia tsutsugamushi (strain Boryong) (Rickettsia tsutsugamushi), this protein is ATP synthase subunit alpha.